We begin with the raw amino-acid sequence, 181 residues long: CASP-like protein 1F1 (181 aa).

Residues 1 to 18 (MPNNEAKFSVNQPLKTQK) lie on the Cytoplasmic side of the membrane. A helical transmembrane segment spans residues 19-39 (LFIGVQIFFRIVAIAASVASS). Topologically, residues 40–70 (WLMITSKQVIDIGGIVLDARYSYSPEFKFLA) are extracellular. The chain crosses the membrane as a helical span at residues 71 to 91 (FTNIVVGCFSLLSLLFLVLVV). Over 92–100 (RQGSNPNHY) the chain is Cytoplasmic. Residues 101-121 (FFLFLHDLAMMSLVVGGCAAA) form a helical membrane-spanning segment. The Extracellular segment spans residues 122–152 (TTVGFLGKHGNSHTGWMQICDNFGKFCNRAQ). A helical transmembrane segment spans residues 153–173 (TSVTISYLNLICLSILTITSA). The Cytoplasmic portion of the chain corresponds to 174-181 (SKSRKMEA).

The protein belongs to the Casparian strip membrane proteins (CASP) family. In terms of assembly, homodimer and heterodimers.

It localises to the cell membrane. The polypeptide is CASP-like protein 1F1 (Populus trichocarpa (Western balsam poplar)).